The primary structure comprises 356 residues: Replication factor C subunit 3 (356 aa).

An N6-acetyllysine modification is found at K20. The residue at position 125 (S125) is a Phosphoserine.

This sequence belongs to the activator 1 small subunits family. As to quaternary structure, subunit of the RFC complex, an heteropentameric complex consisting of a large subunit RFC1 and four small subunits RFC2, RFC3, RFC4 and RFC5; the RFC complex interacts with PCNA. Forms an heterotetrameric complex with RFC2, RFC4 and RFC5; this complex has ATPase activity but is not stimulated by PCNA. The heterotetramer of subunits RFC2, RFC3, RFC4 and RFC5 interacts with RAD17. Interacts with CNTD1; this interaction facilitates crossover formation.

The protein localises to the nucleus. Subunit of the replication factor C (RFC) complex which acts during elongation of primed DNA templates by DNA polymerases delta and epsilon, and is necessary for ATP-dependent loading of proliferating cell nuclear antigen (PCNA) onto primed DNA. In Bos taurus (Bovine), this protein is Replication factor C subunit 3 (RFC3).